The following is a 1009-amino-acid chain: DNA ligase 3 (1009 aa).

Residues 1-42 (MSLAFKIFFPQTLRALSRKELCLFRKHHWRDVRQFSQWSETD) constitute a mitochondrion transit peptide. The PARP-type zinc finger occupies 93–185 (FCVDYAKRGT…QITQHIADLS (93 aa)). Residues cysteine 105, cysteine 108, histidine 139, and cysteine 142 each coordinate Zn(2+). Serine 210, serine 216, serine 227, and serine 242 each carry phosphoserine. The tract at residues 224–256 (RKFSGFSAKPNNSGEAPSSPTPKRSLSSSKCDP) is disordered. A compositionally biased stretch (low complexity) spans 240 to 252 (PSSPTPKRSLSSS). 4 interaction with DNA regions span residues 277–280 (PSYN), 318–323 (VYNLND), 388–391 (TKED), and 421–427 (KMNSGAK). An ATP-binding site is contributed by glutamate 506. Lysine 508 (N6-AMP-lysine intermediate) is an active-site residue. ATP-binding residues include arginine 513 and arginine 528. Mg(2+) is bound by residues glutamate 560 and glutamate 655. Lysine 660, arginine 671, and lysine 675 together coordinate ATP. The disordered stretch occupies residues 842-917 (AGDEGSSTTG…LATKSSPVKV (76 aa)). 2 stretches are compositionally biased toward low complexity: residues 845-854 (EGSSTTGGSS) and 863-877 (SAVS…SAST). Residues 884–898 (LSNSNSKDGNMQTAK) are compositionally biased toward polar residues. Residue serine 913 is modified to Phosphoserine. In terms of domain architecture, BRCT spans 933–1009 (VLLDIFTGVR…IRKRRLVAPC (77 aa)).

It belongs to the ATP-dependent DNA ligase family. In terms of assembly, isoform 3 interacts (via BRCT domain) with the nuclear DNA-repair protein XRCC1. Interacts with POLG. Interacts with POLB. The cofactor is Mg(2+). As to expression, testis, thymus, prostate and heart.

It localises to the mitochondrion. It is found in the nucleus. The catalysed reaction is ATP + (deoxyribonucleotide)n-3'-hydroxyl + 5'-phospho-(deoxyribonucleotide)m = (deoxyribonucleotide)n+m + AMP + diphosphate.. Its function is as follows. Isoform 3 functions as a heterodimer with DNA-repair protein XRCC1 in the nucleus and can correct defective DNA strand-break repair and sister chromatid exchange following treatment with ionizing radiation and alkylating agents. Isoform 1 is targeted to mitochondria, where it functions as a DNA ligase in mitochondrial base-excision DNA repair. This is DNA ligase 3 (LIG3) from Homo sapiens (Human).